The sequence spans 767 residues: Protein transport protein Sec23A (767 aa).

4 residues coordinate Zn(2+): Cys61, Cys66, Cys85, and Cys88. One copy of the Gelsolin-like repeat lies at 634-720 (PEPVLLDSSS…EHGGSQARFL (87 aa)).

It belongs to the SEC23/SEC24 family. SEC23 subfamily. COPII is composed of at least five proteins: the Sec23/24 complex, the Sec13/31 complex and Sar1.

The protein localises to the cytoplasmic vesicle. It localises to the COPII-coated vesicle membrane. Its subcellular location is the endoplasmic reticulum membrane. It is found in the cytoplasm. The protein resides in the cytosol. Its function is as follows. Component of the coat protein complex II (COPII) which promotes the formation of transport vesicles from the endoplasmic reticulum (ER). The coat has two main functions, the physical deformation of the endoplasmic reticulum membrane into vesicles and the selection of cargo molecules for their transport to the Golgi complex. This chain is Protein transport protein Sec23A, found in Gallus gallus (Chicken).